The chain runs to 1401 residues: DNA-directed RNA polymerase subunit beta' (1401 aa).

The Zn(2+) site is built by cysteine 70, cysteine 72, cysteine 85, and cysteine 88. Mg(2+) is bound by residues aspartate 460, aspartate 462, and aspartate 464. Positions 808, 882, 889, and 892 each coordinate Zn(2+).

Belongs to the RNA polymerase beta' chain family. In terms of assembly, the RNAP catalytic core consists of 2 alpha, 1 beta, 1 beta' and 1 omega subunit. When a sigma factor is associated with the core the holoenzyme is formed, which can initiate transcription. It depends on Mg(2+) as a cofactor. Zn(2+) is required as a cofactor.

The catalysed reaction is RNA(n) + a ribonucleoside 5'-triphosphate = RNA(n+1) + diphosphate. In terms of biological role, DNA-dependent RNA polymerase catalyzes the transcription of DNA into RNA using the four ribonucleoside triphosphates as substrates. This chain is DNA-directed RNA polymerase subunit beta', found in Legionella pneumophila (strain Paris).